Consider the following 72-residue polypeptide: Translation initiation factor IF-1 (72 aa).

Residues 1-72 enclose the S1-like domain; sequence MAKDDVIEVE…TRGRIVWRGK (72 aa).

The protein belongs to the IF-1 family. In terms of assembly, component of the 30S ribosomal translation pre-initiation complex which assembles on the 30S ribosome in the order IF-2 and IF-3, IF-1 and N-formylmethionyl-tRNA(fMet); mRNA recruitment can occur at any time during PIC assembly.

It is found in the cytoplasm. Functionally, one of the essential components for the initiation of protein synthesis. Stabilizes the binding of IF-2 and IF-3 on the 30S subunit to which N-formylmethionyl-tRNA(fMet) subsequently binds. Helps modulate mRNA selection, yielding the 30S pre-initiation complex (PIC). Upon addition of the 50S ribosomal subunit IF-1, IF-2 and IF-3 are released leaving the mature 70S translation initiation complex. This is Translation initiation factor IF-1 from Caldanaerobacter subterraneus subsp. tengcongensis (strain DSM 15242 / JCM 11007 / NBRC 100824 / MB4) (Thermoanaerobacter tengcongensis).